A 662-amino-acid polypeptide reads, in one-letter code: Methionine--tRNA ligase (662 aa).

The 'HIGH' region motif lies at 13 to 23; that stretch reads PYTNGPCHLGH. Zn(2+) is bound by residues Cys-144, Cys-147, Cys-156, and Cys-160. The 'KMSKS' region signature appears at 326-330; it reads KFSKS. Lys-329 is a binding site for ATP. Residues 564–662 form the tRNA-binding domain; it reads DFSKVEIKTG…KPVEPGTKIR (99 aa).

This sequence belongs to the class-I aminoacyl-tRNA synthetase family. MetG type 1 subfamily. As to quaternary structure, homodimer. The cofactor is Zn(2+).

The protein localises to the cytoplasm. It catalyses the reaction tRNA(Met) + L-methionine + ATP = L-methionyl-tRNA(Met) + AMP + diphosphate. In terms of biological role, is required not only for elongation of protein synthesis but also for the initiation of all mRNA translation through initiator tRNA(fMet) aminoacylation. The polypeptide is Methionine--tRNA ligase (Methanoregula boonei (strain DSM 21154 / JCM 14090 / 6A8)).